The chain runs to 704 residues: Elongation factor G (704 aa).

The tr-type G domain occupies 8–291; sequence DKVRNIGIMA…TVVECLPSPV (284 aa). GTP-binding positions include 17–24, 90–94, and 144–147; these read AHIDAGKT, DTPGH, and NKMD.

It belongs to the TRAFAC class translation factor GTPase superfamily. Classic translation factor GTPase family. EF-G/EF-2 subfamily.

It localises to the cytoplasm. Functionally, catalyzes the GTP-dependent ribosomal translocation step during translation elongation. During this step, the ribosome changes from the pre-translocational (PRE) to the post-translocational (POST) state as the newly formed A-site-bound peptidyl-tRNA and P-site-bound deacylated tRNA move to the P and E sites, respectively. Catalyzes the coordinated movement of the two tRNA molecules, the mRNA and conformational changes in the ribosome. This is Elongation factor G from Prosthecochloris aestuarii (strain DSM 271 / SK 413).